The primary structure comprises 327 residues: Tetraacyldisaccharide 4'-kinase (327 aa).

Position 56–63 (56–63 (FVGGTGKT)) interacts with ATP.

It belongs to the LpxK family.

The catalysed reaction is a lipid A disaccharide + ATP = a lipid IVA + ADP + H(+). The protein operates within glycolipid biosynthesis; lipid IV(A) biosynthesis; lipid IV(A) from (3R)-3-hydroxytetradecanoyl-[acyl-carrier-protein] and UDP-N-acetyl-alpha-D-glucosamine: step 6/6. Its function is as follows. Transfers the gamma-phosphate of ATP to the 4'-position of a tetraacyldisaccharide 1-phosphate intermediate (termed DS-1-P) to form tetraacyldisaccharide 1,4'-bis-phosphate (lipid IVA). The protein is Tetraacyldisaccharide 4'-kinase of Halorhodospira halophila (strain DSM 244 / SL1) (Ectothiorhodospira halophila (strain DSM 244 / SL1)).